Here is a 376-residue protein sequence, read N- to C-terminus: Probable dual-specificity RNA methyltransferase RlmN (376 aa).

The interval 1–25 is disordered; sequence MSDSERTSLPLVFDEPRGRKKPPRH. Glu113 functions as the Proton acceptor in the catalytic mechanism. Residues 119–362 form the Radical SAM core domain; sequence YPDRATMCVS…PTTVRDTRGR (244 aa). An intrachain disulfide couples Cys126 to Cys368. [4Fe-4S] cluster contacts are provided by Cys133, Cys137, and Cys140. Residues 188 to 189, Ser222, 245 to 247, and Asn325 contribute to the S-adenosyl-L-methionine site; these read GE and SLH. Catalysis depends on Cys368, which acts as the S-methylcysteine intermediate.

The protein belongs to the radical SAM superfamily. RlmN family. The cofactor is [4Fe-4S] cluster.

It is found in the cytoplasm. The catalysed reaction is adenosine(2503) in 23S rRNA + 2 reduced [2Fe-2S]-[ferredoxin] + 2 S-adenosyl-L-methionine = 2-methyladenosine(2503) in 23S rRNA + 5'-deoxyadenosine + L-methionine + 2 oxidized [2Fe-2S]-[ferredoxin] + S-adenosyl-L-homocysteine. It carries out the reaction adenosine(37) in tRNA + 2 reduced [2Fe-2S]-[ferredoxin] + 2 S-adenosyl-L-methionine = 2-methyladenosine(37) in tRNA + 5'-deoxyadenosine + L-methionine + 2 oxidized [2Fe-2S]-[ferredoxin] + S-adenosyl-L-homocysteine. Its function is as follows. Specifically methylates position 2 of adenine 2503 in 23S rRNA and position 2 of adenine 37 in tRNAs. The protein is Probable dual-specificity RNA methyltransferase RlmN of Nocardioides sp. (strain ATCC BAA-499 / JS614).